A 406-amino-acid polypeptide reads, in one-letter code: CinA-like protein (406 aa).

The protein belongs to the CinA family.

This is CinA-like protein from Pseudothermotoga lettingae (strain ATCC BAA-301 / DSM 14385 / NBRC 107922 / TMO) (Thermotoga lettingae).